The following is a 430-amino-acid chain: MKTELSQKLFEKANDLFPGGVNSPVRAFKGVGGTPRFIARAKGSHIVDVDGNDYVDYVLSWGPMIVGHCHPEVMRAVQDAMKEGSSFGAPSPREILLAELVRERMPWVEKMRFVSSGTEATTSAIRVARGFTGRDDIVKFDGCYHGAGDPLLVKAGSGVETLGLPDSPGVPADVARHTLTAPYNDLPALEKVFEAKGASIAAVILEPVVGNMGVLVPRPGFLQGVHDLCKKHGALFIVDEVMTGFRLSSGGACGLYGLRPDLVTFGKVIGAGLPVGAFGGRRDVMDRVAPAGPIYQAGTLSGNPMAMAAGHAALKLMTEAAYRKLETLSAALADGLSAAAAEAKVPVQVNRVGSMLTVFFSHKPVFDAATARACNTRRFGAFFHAMLEHGAYLPPSQFEAAFLSTAHTDDDVARTVAAARVAFAEAAKVA.

Lysine 267 is modified (N6-(pyridoxal phosphate)lysine).

It belongs to the class-III pyridoxal-phosphate-dependent aminotransferase family. HemL subfamily. In terms of assembly, homodimer. Pyridoxal 5'-phosphate serves as cofactor.

The protein localises to the cytoplasm. The enzyme catalyses (S)-4-amino-5-oxopentanoate = 5-aminolevulinate. It participates in porphyrin-containing compound metabolism; protoporphyrin-IX biosynthesis; 5-aminolevulinate from L-glutamyl-tRNA(Glu): step 2/2. This chain is Glutamate-1-semialdehyde 2,1-aminomutase, found in Anaeromyxobacter dehalogenans (strain 2CP-C).